The sequence spans 100 residues: Urease subunit gamma (100 aa).

The protein belongs to the urease gamma subunit family. Heterotrimer of UreA (gamma), UreB (beta) and UreC (alpha) subunits. Three heterotrimers associate to form the active enzyme.

It localises to the cytoplasm. The catalysed reaction is urea + 2 H2O + H(+) = hydrogencarbonate + 2 NH4(+). Its pathway is nitrogen metabolism; urea degradation; CO(2) and NH(3) from urea (urease route): step 1/1. This chain is Urease subunit gamma, found in Rhodococcus opacus (strain B4).